Reading from the N-terminus, the 332-residue chain is L-lactate dehydrogenase A chain (332 aa).

Ala-2 carries the post-translational modification N-acetylalanine. Position 5 is an N6-acetyllysine; alternate (Lys-5). Lys-5 is modified (N6-succinyllysine; alternate). Lys-14 is modified (N6-acetyllysine). Phosphothreonine is present on Thr-18. Residue 29–57 participates in NAD(+) binding; sequence GAVGMACAISILMKDLADELALVDVIEDK. Lys-57 is modified (N6-acetyllysine; alternate). Residue Lys-57 forms a Glycyl lysine isopeptide (Lys-Gly) (interchain with G-Cter in SUMO2); alternate linkage. An N6-acetyllysine modification is found at Lys-81. Residue Arg-99 participates in NAD(+) binding. Arg-106 contributes to the substrate binding site. At Lys-118 the chain carries N6-acetyllysine; alternate. Lys-118 is subject to N6-succinyllysine; alternate. Lys-126 is modified (N6-acetyllysine). Asn-138 contacts NAD(+). Asn-138 and Arg-169 together coordinate substrate. His-193 serves as the catalytic Proton acceptor. N6-acetyllysine occurs at positions 224 and 232. Tyr-239 is subject to Phosphotyrosine. Lys-243 is modified (N6-acetyllysine). Residue Thr-248 coordinates substrate. Residue Thr-309 is modified to Phosphothreonine. Lys-318 is modified (N6-acetyllysine; alternate). An N6-succinyllysine; alternate modification is found at Lys-318. Residue Thr-322 is modified to Phosphothreonine.

This sequence belongs to the LDH/MDH superfamily. LDH family. In terms of assembly, homotetramer. Interacts with PTEN upstream reading frame protein MP31. In terms of processing, ISGylated.

The protein localises to the cytoplasm. It catalyses the reaction (S)-lactate + NAD(+) = pyruvate + NADH + H(+). The protein operates within fermentation; pyruvate fermentation to lactate; (S)-lactate from pyruvate: step 1/1. Its function is as follows. Interconverts simultaneously and stereospecifically pyruvate and lactate with concomitant interconversion of NADH and NAD(+). The sequence is that of L-lactate dehydrogenase A chain (LDHA) from Macaca fascicularis (Crab-eating macaque).